The primary structure comprises 549 residues: Chaperonin GroEL (549 aa).

ATP is bound by residues 29 to 32 (TAGP), K50, 86 to 90 (DGTTT), G418, and D499.

This sequence belongs to the chaperonin (HSP60) family. Forms a cylinder of 14 subunits composed of two heptameric rings stacked back-to-back. Interacts with the co-chaperonin GroES.

It is found in the cytoplasm. The catalysed reaction is ATP + H2O + a folded polypeptide = ADP + phosphate + an unfolded polypeptide.. Its function is as follows. Together with its co-chaperonin GroES, plays an essential role in assisting protein folding. The GroEL-GroES system forms a nano-cage that allows encapsulation of the non-native substrate proteins and provides a physical environment optimized to promote and accelerate protein folding. The protein is Chaperonin GroEL of Wolbachia pipientis wMel.